Reading from the N-terminus, the 430-residue chain is Tol-Pal system protein TolB (430 aa).

Residues 1–21 (MRRFVTLLIALLCLSATAVQA) form the signal peptide.

This sequence belongs to the TolB family. The Tol-Pal system is composed of five core proteins: the inner membrane proteins TolA, TolQ and TolR, the periplasmic protein TolB and the outer membrane protein Pal. They form a network linking the inner and outer membranes and the peptidoglycan layer.

It is found in the periplasm. Functionally, part of the Tol-Pal system, which plays a role in outer membrane invagination during cell division and is important for maintaining outer membrane integrity. The protein is Tol-Pal system protein TolB of Syntrophotalea carbinolica (strain DSM 2380 / NBRC 103641 / GraBd1) (Pelobacter carbinolicus).